We begin with the raw amino-acid sequence, 281 residues long: BEN domain-containing protein 6 (281 aa).

Disordered regions lie at residues 15–62 and 143–172; these read VLRK…ETPL and SFAS…PGEK. Residues 19–99 are a coiled coil; that stretch reads RKRKRTETAN…RLRQSLVMLQ (81 aa). A compositionally biased stretch (low complexity) spans 143-160; sequence SFASLCSNSNSTSSSPSS. A compositionally biased stretch (basic and acidic residues) spans 162 to 172; the sequence is KAEEEQHPGEK. A BEN domain is found at 171 to 271; it reads EKQFTIERWQ…NCTKKPNASK (101 aa).

In terms of assembly, interacts (via BEN domain) with RBPJ.

Its subcellular location is the nucleus. Acts as a corepressor of recombining binding protein suppressor hairless (RBPJ) and inhibits Notch signaling in neural stem cells, thereby opposing their self-renewal and promoting neurogenesis. In Mus musculus (Mouse), this protein is BEN domain-containing protein 6 (Bend6).